Reading from the N-terminus, the 454-residue chain is Protein pid-2 (454 aa).

A disordered region spans residues 31-61 (VQNNQKEHPPVQEIKTVSSKSKEHRVSSSRK). Residues 50 to 61 (KSKEHRVSSSRK) show a composition bias toward basic and acidic residues.

May interact with pid-4, pid-5, app-1 and prmt-5. In terms of tissue distribution, expressed throughout the mitotic and meiotic regions of the germline and in oocytes.

Its subcellular location is the cytoplasm. It localises to the perinuclear region. The protein localises to the cytoplasmic granule. In terms of biological role, involved in gene silencing mediated by a class of 21 nucleotide PIWI-interacting RNAs (piRNAs) that possess a uracil residue at the 5'-end (also called 21U-RNAs) and that guide the Piwi protein prg-1 to its DNA targets for silencing. Not required for the biogenesis of 21U-RNAs. May also be involved in gene silencing mediated by 22G-siRNAs (a class of 22 nucleotide endogenous small interfering RNAs (siRNAs) that possess a triphosphorylated guanine residue at the 5'-end) and 26G-siRNAs (a class of 26 nucleotide siRNAs that possess a guanine residue at the 5'-end). Required for the biogenesis of secondary and tertiary 22G-siRNAs from many loci. Specifically, promotes the production of 22G-siRNAs from the 5' end of target mRNAs. May play a role in the production of 26G-siRNAs. Plays a role in small RNA-directed transgenerational epigenetic inheritance (also called RNAe) over several generations and germline immortality. Together with the argonaut protein hrde-1, promotes the silencing of the DNA transposable element Tc1. Required for the formation of liquid-like condensates in the cytoplasm called Z granules, playing a role in maintaining their assembly, viscosity and morphology in adult germ cells, and localization in early embryos. The chain is Protein pid-2 from Caenorhabditis elegans.